A 230-amino-acid polypeptide reads, in one-letter code: uncharacterized protein (230 aa).

Disordered stretches follow at residues 63-90 and 194-230; these read TDCQ…KKTI and KKLE…YKEH. Residues 194-217 show a composition bias toward basic and acidic residues; sequence KKLEEREQMDKHPQDRDNKDKEVN.

This is an uncharacterized protein from Caenorhabditis elegans.